Here is a 361-residue protein sequence, read N- to C-terminus: Single-stranded DNA-binding protein 3 (361 aa).

M1 is modified (N-acetylmethionine). The LisH domain maps to 16–48 (AREKLALYVYEYLLHVGAQKSAQTFLSEIRWEK). R128, R134, and R138 each carry asymmetric dimethylarginine. Disordered stretches follow at residues 140–166 (GNQP…QQGH) and 184–361 (PMGP…TMSV). Residues 223 to 241 (PNSANSIPYSSSSPGTYVG) show a composition bias toward low complexity. Positions 245 to 255 (GGGPPGTPIMP) are enriched in pro residues. Positions 258–269 (ADSTNSSDNIYT) are enriched in polar residues. The segment covering 288–298 (GSDGPMGGMGG) has biased composition (gly residues). The segment covering 319–330 (NSPNNISGISNP) has biased composition (low complexity). A phosphoserine mark is found at S320, S325, and S328. A Phosphothreonine modification is found at T333. Positions 346-361 (HSFQNDNYSPSMTMSV) are enriched in polar residues. Phosphoserine is present on residues S354 and S360.

The protein resides in the nucleus. In terms of biological role, may be involved in transcription regulation of the alpha 2(I) collagen gene where it binds to the single-stranded polypyrimidine sequences in the promoter region. This is Single-stranded DNA-binding protein 3 (Ssbp3) from Rattus norvegicus (Rat).